The following is a 235-amino-acid chain: Orotidine 5'-phosphate decarboxylase (235 aa).

Substrate-binding positions include Asp12, Lys34, 61 to 70 (DMKLLDIDNT), Thr116, Arg177, Gln186, and Arg207. The Proton donor role is filled by Lys63.

It belongs to the OMP decarboxylase family. Type 1 subfamily. As to quaternary structure, homodimer.

It catalyses the reaction orotidine 5'-phosphate + H(+) = UMP + CO2. It functions in the pathway pyrimidine metabolism; UMP biosynthesis via de novo pathway; UMP from orotate: step 2/2. Its function is as follows. Catalyzes the decarboxylation of orotidine 5'-monophosphate (OMP) to uridine 5'-monophosphate (UMP). This chain is Orotidine 5'-phosphate decarboxylase, found in Rhizobium etli (strain CIAT 652).